The following is a 470-amino-acid chain: 6-phospho-beta-galactosidase (470 aa).

Residues Gln-19, His-116, Asn-159, Glu-160, and Asn-297 each coordinate D-galactose 6-phosphate. Glu-160 serves as the catalytic Proton donor. The active-site Nucleophile is Glu-375. D-galactose 6-phosphate-binding residues include Ser-430, Trp-431, Lys-437, and Tyr-439.

It belongs to the glycosyl hydrolase 1 family.

The catalysed reaction is a 6-phospho-beta-D-galactoside + H2O = D-galactose 6-phosphate + an alcohol. The protein operates within carbohydrate metabolism; lactose degradation; D-galactose 6-phosphate and beta-D-glucose from lactose 6-phosphate: step 1/1. This is 6-phospho-beta-galactosidase from Staphylococcus aureus (strain MRSA252).